The following is a 176-amino-acid chain: Ribosome rescue factor SmrB (176 aa).

One can recognise a Smr domain in the interval 98–173 (LDLHGLTQKQ…GTAALLVLVE (76 aa)).

It belongs to the SmrB family. Associates with collided ribosomes, but not with correctly translating polysomes.

In terms of biological role, acts as a ribosome collision sensor. Detects stalled/collided disomes (pairs of ribosomes where the leading ribosome is stalled and a second ribosome has collided with it) and endonucleolytically cleaves mRNA at the 5' boundary of the stalled ribosome. Stalled/collided disomes form a new interface (primarily via the 30S subunits) that binds SmrB. Cleaved mRNA becomes available for tmRNA ligation, leading to ribosomal subunit dissociation and rescue of stalled ribosomes. This Yersinia enterocolitica serotype O:8 / biotype 1B (strain NCTC 13174 / 8081) protein is Ribosome rescue factor SmrB.